A 329-amino-acid chain; its full sequence is Ribosomal protein L11 methyltransferase (329 aa).

S-adenosyl-L-methionine-binding residues include T177, G198, D220, and N264.

Belongs to the methyltransferase superfamily. PrmA family.

The protein localises to the cytoplasm. It catalyses the reaction L-lysyl-[protein] + 3 S-adenosyl-L-methionine = N(6),N(6),N(6)-trimethyl-L-lysyl-[protein] + 3 S-adenosyl-L-homocysteine + 3 H(+). Functionally, methylates ribosomal protein L11. This Helicobacter pylori (strain J99 / ATCC 700824) (Campylobacter pylori J99) protein is Ribosomal protein L11 methyltransferase.